The chain runs to 504 residues: Topoisomerase I damage affected protein 11 (504 aa).

The segment at 32-62 is disordered; that stretch reads RKTGRKIRSASSNGYRLEHHRTSSAGSMHSQ. The stretch at 179 to 231 forms a coiled coil; the sequence is ALLQSLATKELELLECKQKIEDLKKQTQHEEQNYTRRARELHELKEQVSKHLD. Thr-236 is subject to Phosphothreonine. A phosphoserine mark is found at Ser-244 and Ser-286. Disordered regions lie at residues 252–306, 332–377, and 400–504; these read LESR…SKQS, WDDS…SVSR, and DVIT…MTDF. The segment covering 257–287 has biased composition (polar residues); the sequence is ENAGNSSLPSSVSKPKNMGHQSTNQSRSVSP. Residues 290-301 show a composition bias toward basic and acidic residues; it reads IQERRQRDDSSD. Polar residues-rich tracts occupy residues 332–359 and 368–377; these read WDDS…QQYD and KSPSQGSVSR. Positions 403 to 421 are enriched in basic and acidic residues; it reads TDNRCDPVYKSDRQHEQKK. The segment covering 470–479 has biased composition (basic residues); sequence TREKKSKRSS. The span at 491–504 shows a compositional bias: polar residues; that stretch reads DNSSVKNSVEMTDF.

The protein belongs to the TDA11 family.

The protein localises to the cytoplasm. This chain is Topoisomerase I damage affected protein 11 (TDA11), found in Saccharomyces cerevisiae (strain ATCC 204508 / S288c) (Baker's yeast).